The following is a 69-amino-acid chain: Small, acid-soluble spore protein I (69 aa).

The protein belongs to the SspI family.

The protein localises to the spore core. This is Small, acid-soluble spore protein I from Geobacillus kaustophilus (strain HTA426).